The following is a 422-amino-acid chain: Dihydroorotase (422 aa).

Zn(2+) contacts are provided by His-53 and His-55. Substrate is bound by residues 55-57 (HFR) and Asn-87. The Zn(2+) site is built by Glu-138, His-172, His-223, and Asp-291. Asp-291 is a catalytic residue. Position 295 (His-295) interacts with substrate.

This sequence belongs to the metallo-dependent hydrolases superfamily. DHOase family. Class I DHOase subfamily. Zn(2+) is required as a cofactor.

It carries out the reaction (S)-dihydroorotate + H2O = N-carbamoyl-L-aspartate + H(+). It participates in pyrimidine metabolism; UMP biosynthesis via de novo pathway; (S)-dihydroorotate from bicarbonate: step 3/3. In terms of biological role, catalyzes the reversible cyclization of carbamoyl aspartate to dihydroorotate. The chain is Dihydroorotase from Halobacterium salinarum (strain ATCC 700922 / JCM 11081 / NRC-1) (Halobacterium halobium).